Here is a 521-residue protein sequence, read N- to C-terminus: Protein translocase subunit SecD (521 aa).

Transmembrane regions (helical) follow at residues 8–28, 359–379, 388–408, 410–430, 459–479, and 483–503; these read LKLA…LPNG, AGIL…VLFY, IALL…EATL, LPGM…NILI, IVDS…FGTG, and GFAL…LLLS.

It belongs to the SecD/SecF family. SecD subfamily. As to quaternary structure, forms a complex with SecF. Part of the essential Sec protein translocation apparatus which comprises SecA, SecYEG and auxiliary proteins SecDF-YajC and YidC.

The protein resides in the cell inner membrane. Functionally, part of the Sec protein translocase complex. Interacts with the SecYEG preprotein conducting channel. SecDF uses the proton motive force (PMF) to complete protein translocation after the ATP-dependent function of SecA. This chain is Protein translocase subunit SecD, found in Acetobacter pasteurianus (strain NBRC 105184 / IFO 3283-01).